The primary structure comprises 1127 residues: Collagen alpha-2(I) chain (1127 aa).

Over residues 1 to 16 (DGKPGLPGPAGPPGPP) the composition is skewed to pro residues. A disordered region spans residues 1 to 1017 (DGKPGLPGPA…GPAGPAGGGY (1017 aa)). Low complexity-rich tracts occupy residues 171–191 (AGPA…AAGP), 221–230 (EPGPNGAVGP), and 237–258 (PGNN…AGAP). The segment covering 260–270 (FPGPRGGPGPQ) has biased composition (pro residues). The segment covering 272-282 (PQGAAGQRGLA) has biased composition (low complexity). Gly residues predominate over residues 289–298 (GVKGDGGPKG). Composition is skewed to low complexity over residues 326 to 345 (ATGP…RGMP), 355 to 398 (AAGP…AGPA), 436 to 449 (APGP…TGAT), and 461 to 473 (QGAA…QGLP). Over residues 474–483 (GPAGGAGEAG) the composition is skewed to gly residues. Low complexity predominate over residues 508-518 (NPGAAGASGPQ). Over residues 531–568 (GTDGGKGEPGAAGAAGGPGHQGPGGMPGERGAAGGPGG) the composition is skewed to gly residues. Positions 569 to 580 (KGEKGEAGHRGP) are enriched in basic and acidic residues. Low complexity-rich tracts occupy residues 611 to 625 (SGSF…ARGA) and 634 to 647 (PAGA…PGAD). Residues 657-666 (GPSGGKGESG) show a composition bias toward gly residues. Low complexity-rich tracts occupy residues 667–692 (PSGP…TGAR), 703–730 (FPGA…PAGK), and 758–778 (SGEK…PLGL). Residues 792–801 (GSPGGAGAVG) show a composition bias toward gly residues. 2 stretches are compositionally biased toward low complexity: residues 802 to 824 (EAGR…LGLP) and 860 to 872 (PGSS…AGAP). The span at 876–897 (GPSGGAGRPGNRGESGPGGAAG) shows a compositional bias: gly residues. Residues 898-913 (AVGPAGARGAAGPSGP) show a composition bias toward low complexity. Over residues 914–928 (RGEKGVAGEKGERGM) the composition is skewed to basic and acidic residues. 2 stretches are compositionally biased toward low complexity: residues 937–956 (LQGM…AGPN) and 986–997 (PGARGPPGYVGP). Over residues 998–1010 (AGPPGXPGLPGPA) the composition is skewed to pro residues. The Fibrillar collagen NC1 domain occupies 1093–1127 (RTNKPSRLPLLDLAPLDLGGADQEFGLDLGPVCFK).

The protein belongs to the fibrillar collagen family.

It localises to the secreted. The protein localises to the extracellular space. The protein resides in the extracellular matrix. The protein is Collagen alpha-2(I) chain of Epinephelus marginatus (Dusky grouper).